Reading from the N-terminus, the 345-residue chain is Type II restriction enzyme HgiCI (345 aa).

It catalyses the reaction Endonucleolytic cleavage of DNA to give specific double-stranded fragments with terminal 5'-phosphates.. In terms of biological role, a P subtype restriction enzyme that recognizes the double-stranded sequence 5'-GGYRCC-3' and cleaves after G-1. The protein is Type II restriction enzyme HgiCI (hgiCIR) of Herpetosiphon aurantiacus (Herpetosiphon giganteus).